The primary structure comprises 375 residues: Queuine tRNA-ribosyltransferase (375 aa).

Asp-90 (proton acceptor) is an active-site residue. Residues 90–94 (DSGGF), Asp-144, Gln-190, and Gly-217 contribute to the substrate site. The interval 248 to 254 (GIGTPHY) is RNA binding. Asp-267 acts as the Nucleophile in catalysis. Residues 272–276 (ARITR) are RNA binding; important for wobble base 34 recognition. Cys-305, Cys-307, Cys-310, and His-336 together coordinate Zn(2+).

The protein belongs to the queuine tRNA-ribosyltransferase family. As to quaternary structure, homodimer. Within each dimer, one monomer is responsible for RNA recognition and catalysis, while the other monomer binds to the replacement base PreQ1. Zn(2+) serves as cofactor.

The catalysed reaction is 7-aminomethyl-7-carbaguanine + guanosine(34) in tRNA = 7-aminomethyl-7-carbaguanosine(34) in tRNA + guanine. It functions in the pathway tRNA modification; tRNA-queuosine biosynthesis. Its function is as follows. Catalyzes the base-exchange of a guanine (G) residue with the queuine precursor 7-aminomethyl-7-deazaguanine (PreQ1) at position 34 (anticodon wobble position) in tRNAs with GU(N) anticodons (tRNA-Asp, -Asn, -His and -Tyr). Catalysis occurs through a double-displacement mechanism. The nucleophile active site attacks the C1' of nucleotide 34 to detach the guanine base from the RNA, forming a covalent enzyme-RNA intermediate. The proton acceptor active site deprotonates the incoming PreQ1, allowing a nucleophilic attack on the C1' of the ribose to form the product. After dissociation, two additional enzymatic reactions on the tRNA convert PreQ1 to queuine (Q), resulting in the hypermodified nucleoside queuosine (7-(((4,5-cis-dihydroxy-2-cyclopenten-1-yl)amino)methyl)-7-deazaguanosine). The protein is Queuine tRNA-ribosyltransferase of Borreliella burgdorferi (strain ZS7) (Borrelia burgdorferi).